A 224-amino-acid chain; its full sequence is Glycerol-3-phosphate acyltransferase (224 aa).

A run of 6 helical transmembrane segments spans residues 3 to 23, 54 to 74, 90 to 112, 127 to 147, 152 to 172, and 183 to 203; these read IFLSIAINILIFWIGYLIGSL, VFGYKVAIVILFIDIFKVVFA, LYFYIPLIAGLAAQIGQAYPIYF, LISINVLLWPIAGVFFFLLLF, VSLSSLLTTLIMIGFISIPWM, and GFGQFWVNIIIYLFAAALIFW.

Belongs to the PlsY family. Probably interacts with PlsX.

The protein localises to the cell membrane. It catalyses the reaction an acyl phosphate + sn-glycerol 3-phosphate = a 1-acyl-sn-glycero-3-phosphate + phosphate. It participates in lipid metabolism; phospholipid metabolism. Its function is as follows. Catalyzes the transfer of an acyl group from acyl-phosphate (acyl-PO(4)) to glycerol-3-phosphate (G3P) to form lysophosphatidic acid (LPA). This enzyme utilizes acyl-phosphate as fatty acyl donor, but not acyl-CoA or acyl-ACP. In Mycoplasmopsis synoviae (strain 53) (Mycoplasma synoviae), this protein is Glycerol-3-phosphate acyltransferase.